The chain runs to 227 residues: Ubiquitin domain-containing protein 1 (227 aa).

Residues 1 to 36 (MGNCVGRQRRERPTAPGHPRKRAGRNEPLKKERLKW) are disordered. The segment covering 24-36 (GRNEPLKKERLKW) has biased composition (basic and acidic residues). The Ubiquitin-like domain occupies 149-224 (FPLKVRLSTG…IQVIINQPPP (76 aa)).

As to quaternary structure, interacts with UBTD1.

Functionally, may be involved in the regulation of cellular senescence through a positive feedback loop with TP53. Is a TP53 downstream target gene that increases the stability of TP53 protein by promoting the ubiquitination and degradation of MDM2. The sequence is that of Ubiquitin domain-containing protein 1 (UBTD1) from Bos taurus (Bovine).